Here is a 75-residue protein sequence, read N- to C-terminus: Veswaprin-b (75 aa).

The signal sequence occupies residues 1–24 (MSSGGLLLLLGLLTLWAELTPISG). The tract at residues 23-42 (SGQDRPKKPGLRPPRPQKPP) is disordered. Residues 27-72 (RPKKPGLRPPRPQKPPCVRECKNDWRCPGEQKCCRYGCIYECRDPI) enclose the WAP; atypical domain. 3 cysteine pairs are disulfide-bonded: Cys-43–Cys-64, Cys-47–Cys-59, and Cys-53–Cys-68.

This sequence belongs to the venom waprin family. As to expression, expressed by the venom gland.

The protein localises to the secreted. Damages membranes of susceptible bacteria. Has no hemolytic activity. Not toxic to mice. Does not inhibit the proteinases elastase and cathepsin G. This chain is Veswaprin-b, found in Demansia vestigiata (Lesser black whip snake).